We begin with the raw amino-acid sequence, 257 residues long: Imidazole glycerol phosphate synthase subunit HisF (257 aa).

Catalysis depends on residues Asp11 and Asp130.

The protein belongs to the HisA/HisF family. Heterodimer of HisH and HisF.

It is found in the cytoplasm. The enzyme catalyses 5-[(5-phospho-1-deoxy-D-ribulos-1-ylimino)methylamino]-1-(5-phospho-beta-D-ribosyl)imidazole-4-carboxamide + L-glutamine = D-erythro-1-(imidazol-4-yl)glycerol 3-phosphate + 5-amino-1-(5-phospho-beta-D-ribosyl)imidazole-4-carboxamide + L-glutamate + H(+). The protein operates within amino-acid biosynthesis; L-histidine biosynthesis; L-histidine from 5-phospho-alpha-D-ribose 1-diphosphate: step 5/9. In terms of biological role, IGPS catalyzes the conversion of PRFAR and glutamine to IGP, AICAR and glutamate. The HisF subunit catalyzes the cyclization activity that produces IGP and AICAR from PRFAR using the ammonia provided by the HisH subunit. The chain is Imidazole glycerol phosphate synthase subunit HisF from Aeromonas salmonicida (strain A449).